The primary structure comprises 290 residues: 4-hydroxy-tetrahydrodipicolinate synthase (290 aa).

Thr44 is a binding site for pyruvate. Catalysis depends on Tyr132, which acts as the Proton donor/acceptor. Residue Lys160 is the Schiff-base intermediate with substrate of the active site. Ile202 is a pyruvate binding site.

This sequence belongs to the DapA family. In terms of assembly, homotetramer; dimer of dimers.

It localises to the cytoplasm. It carries out the reaction L-aspartate 4-semialdehyde + pyruvate = (2S,4S)-4-hydroxy-2,3,4,5-tetrahydrodipicolinate + H2O + H(+). It participates in amino-acid biosynthesis; L-lysine biosynthesis via DAP pathway; (S)-tetrahydrodipicolinate from L-aspartate: step 3/4. Its function is as follows. Catalyzes the condensation of (S)-aspartate-beta-semialdehyde [(S)-ASA] and pyruvate to 4-hydroxy-tetrahydrodipicolinate (HTPA). The polypeptide is 4-hydroxy-tetrahydrodipicolinate synthase (Geotalea uraniireducens (strain Rf4) (Geobacter uraniireducens)).